The following is a 138-amino-acid chain: Large ribosomal subunit protein bL17 (138 aa).

The protein belongs to the bacterial ribosomal protein bL17 family. Part of the 50S ribosomal subunit. Contacts protein L32.

This is Large ribosomal subunit protein bL17 from Methylorubrum populi (strain ATCC BAA-705 / NCIMB 13946 / BJ001) (Methylobacterium populi).